The primary structure comprises 204 residues: Thymidylate kinase (204 aa).

9 to 16 (GIEASGKT) serves as a coordination point for ATP.

It belongs to the thymidylate kinase family.

The catalysed reaction is dTMP + ATP = dTDP + ADP. Functionally, phosphorylation of dTMP to form dTDP in both de novo and salvage pathways of dTTP synthesis. The protein is Thymidylate kinase of Sulfurihydrogenibium sp. (strain YO3AOP1).